Here is a 579-residue protein sequence, read N- to C-terminus: PCNA-interacting partner (579 aa).

Residues 480–543 (TSFGNVHLDR…AKIPKKSNDS (64 aa)) are disordered. Basic and acidic residues predominate over residues 486–496 (HLDRSKNEKVS).

This sequence belongs to the PARI family. As to quaternary structure, interacts with RAD51 and PCNA. Interacts with PARP1. Interacts with TASOR. Restricted to testis. Overexpressed in multiple cancer cells.

It localises to the cytoplasm. The protein localises to the nucleus. In terms of biological role, required to suppress inappropriate homologous recombination, thereby playing a central role DNA repair and in the maintenance of genomic stability. Antagonizes homologous recombination by interfering with the formation of the RAD51-DNA homologous recombination structure. Binds single-strand DNA and poly(A) homopolymers. Positively regulate the poly(ADP-ribosyl)ation activity of PARP1; however such function may be indirect. This Homo sapiens (Human) protein is PCNA-interacting partner (PARPBP).